We begin with the raw amino-acid sequence, 184 residues long: Peptidyl-tRNA hydrolase (184 aa).

Tyrosine 14 provides a ligand contact to tRNA. The active-site Proton acceptor is the histidine 19. Phenylalanine 64, asparagine 66, and asparagine 112 together coordinate tRNA.

The protein belongs to the PTH family. In terms of assembly, monomer.

It localises to the cytoplasm. The catalysed reaction is an N-acyl-L-alpha-aminoacyl-tRNA + H2O = an N-acyl-L-amino acid + a tRNA + H(+). In terms of biological role, hydrolyzes ribosome-free peptidyl-tRNAs (with 1 or more amino acids incorporated), which drop off the ribosome during protein synthesis, or as a result of ribosome stalling. Catalyzes the release of premature peptidyl moieties from peptidyl-tRNA molecules trapped in stalled 50S ribosomal subunits, and thus maintains levels of free tRNAs and 50S ribosomes. In Thermoanaerobacter pseudethanolicus (strain ATCC 33223 / 39E) (Clostridium thermohydrosulfuricum), this protein is Peptidyl-tRNA hydrolase.